Consider the following 366-residue polypeptide: D-alanine--D-alanine ligase A (366 aa).

One can recognise an ATP-grasp domain in the interval 145 to 348 (KRLLRDAGLK…YRELITALIE (204 aa)). 175–230 (VEQLGLPLFVKPANQGSSVGVSKVKREADLRAALDEAFRYDHKVLVEQAVIGREIE) is an ATP binding site. Residues D302, E315, and N317 each contribute to the Mg(2+) site.

This sequence belongs to the D-alanine--D-alanine ligase family. It depends on Mg(2+) as a cofactor. Mn(2+) serves as cofactor.

It is found in the cytoplasm. The enzyme catalyses 2 D-alanine + ATP = D-alanyl-D-alanine + ADP + phosphate + H(+). It functions in the pathway cell wall biogenesis; peptidoglycan biosynthesis. Its function is as follows. Cell wall formation. This Chromobacterium violaceum (strain ATCC 12472 / DSM 30191 / JCM 1249 / CCUG 213 / NBRC 12614 / NCIMB 9131 / NCTC 9757 / MK) protein is D-alanine--D-alanine ligase A.